We begin with the raw amino-acid sequence, 158 residues long: MKSKNSRLDAIKIIISSKEVGSQEELLQELAKEGFRLTQATLSRDLKQLKVAKAASMNGNYVYVLPNNTMYKRMTEQHSASEMLMHNGFISIEFSANLAVIKTRPGYASSLAYDIDNRNFDEILGTIAGDDTIMLVIREGCTRAGVKNALSLIIPNIQ.

It belongs to the ArgR family.

Its subcellular location is the cytoplasm. The protein operates within amino-acid biosynthesis; L-arginine biosynthesis [regulation]. Regulates arginine biosynthesis genes. The chain is Arginine repressor from Phocaeicola vulgatus (strain ATCC 8482 / DSM 1447 / JCM 5826 / CCUG 4940 / NBRC 14291 / NCTC 11154) (Bacteroides vulgatus).